Consider the following 588-residue polypeptide: NADP-dependent malic enzyme 3 (588 aa).

Residue glycine 2 is modified to N-acetylglycine. Tyrosine 136 functions as the Proton donor in the catalytic mechanism. Residue arginine 189 coordinates NADP(+). Lysine 207 (proton acceptor) is an active-site residue. 3 residues coordinate a divalent metal cation: glutamate 279, aspartate 280, and aspartate 303. NADP(+)-binding positions include aspartate 303, 332–348 (LFLG…ELIA), and asparagine 444.

It belongs to the malic enzymes family. In terms of assembly, homohexamers and homooctamers. It depends on Mg(2+) as a cofactor. The cofactor is Mn(2+). In terms of tissue distribution, mostly expressed in flowers, and, to a lower extent, in stems. In leaves and stems, restricted to the trichomes and trichome basal cells. Also present in the stipules flanking the base of the inflorescence bract leaves and in the meristematic zone of developing lateral roots. In flowers, present in pollen and the abscission zone of developing siliques.

It localises to the cytoplasm. The enzyme catalyses (S)-malate + NADP(+) = pyruvate + CO2 + NADPH. The catalysed reaction is oxaloacetate + H(+) = pyruvate + CO2. Its activity is regulated as follows. Slightly activated by succinate and aspartate. Repressed by fumarate, malate, oxaloacetate and glucose. In Arabidopsis thaliana (Mouse-ear cress), this protein is NADP-dependent malic enzyme 3 (NADP-ME3).